Consider the following 501-residue polypeptide: Eukaryotic translation initiation factor 3 subunit E (501 aa).

In terms of domain architecture, PCI spans 245–423; sequence CDLFFYTPYL…ESIESTSTNV (179 aa). Phosphoserine occurs at positions 477 and 479.

The protein belongs to the eIF-3 subunit E family. As to quaternary structure, component of the eukaryotic translation initiation factor 3 (eIF-3) complex. The eIF-3 complex appears to include tif32/eif3a, SPAC25G10.08/eif3b, tif33/eif3c, SPBC4C3.07/eif3f, tif35/eif3g and sum1/eif3i. This set of common subunits may also associate exclusively with either moe1/eif3d and int6/eif3e, or with SPAC821.05/eif3h and SPAC1751.03/eif3m. The eIF-3 complex may also include SPAC3A12.13c/eif3j. Also interacts with the proteasome via rpn501/rpn502.

It localises to the cytoplasm. Functionally, component of the eukaryotic translation initiation factor 3 (eIF-3) complex, which is involved in protein synthesis of a specialized repertoire of mRNAs and, together with other initiation factors, stimulates binding of mRNA and methionyl-tRNAi to the 40S ribosome. The eIF-3 complex specifically targets and initiates translation of a subset of mRNAs involved in cell proliferation (Potential). Required for maintaining the basal level of atf1 and for transcriptional activation of core environmental stress response genes (CESR genes) in response to histidine starvation. May positively regulate proteasome activity. Required for nuclear localization of the proteasome subunit rpn501/rpn502. The sequence is that of Eukaryotic translation initiation factor 3 subunit E (int6) from Schizosaccharomyces pombe (strain 972 / ATCC 24843) (Fission yeast).